The chain runs to 379 residues: Sterol 24-C-methyltransferase erg-4 (379 aa).

This sequence belongs to the class I-like SAM-binding methyltransferase superfamily. Erg6/SMT family.

It catalyses the reaction lanosterol + S-adenosyl-L-methionine = eburicol + S-adenosyl-L-homocysteine + H(+). The protein operates within steroid metabolism; ergosterol biosynthesis. In terms of biological role, catalyzes the methyl transfer from S-adenosyl-methionine to the C-24 of lanosterol to form eburicol. The polypeptide is Sterol 24-C-methyltransferase erg-4 (Neurospora crassa (strain ATCC 24698 / 74-OR23-1A / CBS 708.71 / DSM 1257 / FGSC 987)).